Reading from the N-terminus, the 419-residue chain is E3 ubiquitin-protein ligase pellino homolog 2 (419 aa).

The FHA; atypical domain occupies E15–S202.

Belongs to the pellino family. As to quaternary structure, interacts with TRAF6, IRAK4 and MAP3K7. Interacts with IRAK1. Interacts with BCL10; this interaction is impaired by SOCS3. In terms of processing, phosphorylated by IRAK1 and IRAK4 enhancing its E3 ligase activity. Widely expressed both in embryos and adult. Weakly or not expressed in spleen and thymus.

The enzyme catalyses S-ubiquitinyl-[E2 ubiquitin-conjugating enzyme]-L-cysteine + [acceptor protein]-L-lysine = [E2 ubiquitin-conjugating enzyme]-L-cysteine + N(6)-ubiquitinyl-[acceptor protein]-L-lysine.. It functions in the pathway protein modification; protein ubiquitination. E3 ubiquitin ligase catalyzing the covalent attachment of ubiquitin moieties onto substrate proteins. Involved in the TLR and IL-1 signaling pathways via interaction with the complex containing IRAK kinases and TRAF6. Mediates IL1B-induced IRAK1 'Lys-63'-linked polyubiquitination and possibly 'Lys-48'-linked ubiquitination. May be important for LPS- and IL1B-induced MAP3K7-dependent, but not MAP3K3-dependent, NF-kappa-B activation. Can activate the MAP (mitogen activated protein) kinase pathway leading to activation of ELK1. The polypeptide is E3 ubiquitin-protein ligase pellino homolog 2 (Peli2) (Mus musculus (Mouse)).